Consider the following 157-residue polypeptide: Small ribosomal subunit protein uS7 (157 aa).

The protein belongs to the universal ribosomal protein uS7 family. As to quaternary structure, part of the 30S ribosomal subunit. Contacts proteins S9 and S11.

Functionally, one of the primary rRNA binding proteins, it binds directly to 16S rRNA where it nucleates assembly of the head domain of the 30S subunit. Is located at the subunit interface close to the decoding center, probably blocks exit of the E-site tRNA. The sequence is that of Small ribosomal subunit protein uS7 from Akkermansia muciniphila (strain ATCC BAA-835 / DSM 22959 / JCM 33894 / BCRC 81048 / CCUG 64013 / CIP 107961 / Muc).